The chain runs to 153 residues: ATP synthase subunit b' (153 aa).

A helical transmembrane segment spans residues 23–40 (LMAIQVVALTYILNSLFF).

This sequence belongs to the ATPase B chain family. F-type ATPases have 2 components, F(1) - the catalytic core - and F(0) - the membrane proton channel. F(1) has five subunits: alpha(3), beta(3), gamma(1), delta(1), epsilon(1). F(0) has four main subunits: a(1), b(1), b'(1) and c(10-14). The alpha and beta chains form an alternating ring which encloses part of the gamma chain. F(1) is attached to F(0) by a central stalk formed by the gamma and epsilon chains, while a peripheral stalk is formed by the delta, b and b' chains.

The protein localises to the cellular thylakoid membrane. F(1)F(0) ATP synthase produces ATP from ADP in the presence of a proton or sodium gradient. F-type ATPases consist of two structural domains, F(1) containing the extramembraneous catalytic core and F(0) containing the membrane proton channel, linked together by a central stalk and a peripheral stalk. During catalysis, ATP synthesis in the catalytic domain of F(1) is coupled via a rotary mechanism of the central stalk subunits to proton translocation. Functionally, component of the F(0) channel, it forms part of the peripheral stalk, linking F(1) to F(0). The b'-subunit is a diverged and duplicated form of b found in plants and photosynthetic bacteria. This Prochlorococcus marinus (strain MIT 9515) protein is ATP synthase subunit b'.